The following is an 80-amino-acid chain: VKSRYHQRQYRARKRYAKARRTKKPKRRPKPPRKLRYAPSKKQPKIMKLKLDNEVDNTLKAKNKSLNEALKNRLSLRKHV.

Over residues 1-36 (VKSRYHQRQYRARKRYAKARRTKKPKRRPKPPRKLR) the composition is skewed to basic residues. The disordered stretch occupies residues 1–44 (VKSRYHQRQYRARKRYAKARRTKKPKRRPKPPRKLRYAPSKKQP).

Its subcellular location is the nucleus. It is found in the chromosome. Involved in nuclear basic protein transition: histones are replaced by spermatid specific proteins which are themselves replaced by protamines in late spermatids. The protein is Spermatid-specific protein S2 of Scyliorhinus canicula (Small-spotted catshark).